The chain runs to 84 residues: Magnetosome protein MamR (84 aa).

This sequence belongs to the magnetosome MamR family.

It localises to the magnetosome. May play a role in controlling magnetite number and size but not in control of magnetite morphology. The protein is Magnetosome protein MamR of Paramagnetospirillum magneticum (strain ATCC 700264 / AMB-1) (Magnetospirillum magneticum).